Consider the following 287-residue polypeptide: Agamous-like MADS-box protein AGL53 (287 aa).

The MADS-box domain maps to 30 to 78 (STAKKTTNLSMREQTMFKKALELSTLCNIDVCVIYYGRDGKLIKTWPED). The disordered stretch occupies residues 151–171 (EFGQTRAVSSTTNPLSPPPSL).

In terms of assembly, interacts with MEE14/CBP1.

The protein localises to the nucleus. Its function is as follows. Probable transcription factor that may function in the maintenance of the proper function of the central cell in pollen tube attraction. The sequence is that of Agamous-like MADS-box protein AGL53 from Arabidopsis thaliana (Mouse-ear cress).